Reading from the N-terminus, the 647-residue chain is Threonine--tRNA ligase (647 aa).

Residues 1–61 (MINITFPDGA…TEDGSIEIVT (61 aa)) enclose the TGS domain. A catalytic region spans residues 242 to 540 (DHRKLGKELD…LIENYKGAFP (299 aa)). Residues Cys-336, His-387, and His-517 each coordinate Zn(2+).

It belongs to the class-II aminoacyl-tRNA synthetase family. As to quaternary structure, homodimer. Requires Zn(2+) as cofactor.

The protein localises to the cytoplasm. The enzyme catalyses tRNA(Thr) + L-threonine + ATP = L-threonyl-tRNA(Thr) + AMP + diphosphate + H(+). Catalyzes the attachment of threonine to tRNA(Thr) in a two-step reaction: L-threonine is first activated by ATP to form Thr-AMP and then transferred to the acceptor end of tRNA(Thr). Also edits incorrectly charged L-seryl-tRNA(Thr). The protein is Threonine--tRNA ligase of Streptococcus pneumoniae serotype 2 (strain D39 / NCTC 7466).